Here is a 237-residue protein sequence, read N- to C-terminus: Large ribosomal subunit protein uL2 (237 aa).

Residues 1–11 show a composition bias toward polar residues; sequence MGKRLISQNRG. Disordered regions lie at residues 1–26 and 204–237; these read MGKR…KRKG and PYGG…SRRT. Basic residues-rich tracts occupy residues 13–26 and 228–237; these read GTPK…KRKG and KVGHIASRRT.

It belongs to the universal ribosomal protein uL2 family. In terms of assembly, part of the 50S ribosomal subunit. Forms a bridge to the 30S subunit in the 70S ribosome.

Functionally, one of the primary rRNA binding proteins. Required for association of the 30S and 50S subunits to form the 70S ribosome, for tRNA binding and peptide bond formation. It has been suggested to have peptidyltransferase activity; this is somewhat controversial. Makes several contacts with the 16S rRNA in the 70S ribosome. In Methanococcus vannielii, this protein is Large ribosomal subunit protein uL2.